Reading from the N-terminus, the 140-residue chain is Nuclear receptor 2C2-associated protein (140 aa).

Belongs to the NR2C2AP family. As to quaternary structure, interacts with NR2C2/TR4.

The protein resides in the nucleus. In terms of biological role, may act as a repressor of NR2C2-mediated transactivation by suppressing the binding between NR2C2/TR4 and the TR4-response element in target genes. The protein is Nuclear receptor 2C2-associated protein (Nr2c2ap) of Mus musculus (Mouse).